Consider the following 240-residue polypeptide: ATP-dependent dethiobiotin synthetase BioD (240 aa).

12 to 17 is a binding site for ATP; sequence EIGKTV. Residue T16 participates in Mg(2+) binding. K37 is a catalytic residue. S41 is a binding site for substrate. Residues D54, 115–118, 179–180, and 207–209 contribute to the ATP site; these read EGSG, NQ, and PYI. The Mg(2+) site is built by D54 and E115.

It belongs to the dethiobiotin synthetase family. In terms of assembly, homodimer. Requires Mg(2+) as cofactor.

Its subcellular location is the cytoplasm. The catalysed reaction is (7R,8S)-7,8-diammoniononanoate + CO2 + ATP = (4R,5S)-dethiobiotin + ADP + phosphate + 3 H(+). The protein operates within cofactor biosynthesis; biotin biosynthesis; biotin from 7,8-diaminononanoate: step 1/2. Its function is as follows. Catalyzes a mechanistically unusual reaction, the ATP-dependent insertion of CO2 between the N7 and N8 nitrogen atoms of 7,8-diaminopelargonic acid (DAPA, also called 7,8-diammoniononanoate) to form a ureido ring. This is ATP-dependent dethiobiotin synthetase BioD from Clostridium acetobutylicum (strain ATCC 824 / DSM 792 / JCM 1419 / IAM 19013 / LMG 5710 / NBRC 13948 / NRRL B-527 / VKM B-1787 / 2291 / W).